A 361-amino-acid polypeptide reads, in one-letter code: Phenylalanine--tRNA ligase alpha subunit (361 aa).

A Mg(2+)-binding site is contributed by E260.

It belongs to the class-II aminoacyl-tRNA synthetase family. Phe-tRNA synthetase alpha subunit type 1 subfamily. In terms of assembly, tetramer of two alpha and two beta subunits. Requires Mg(2+) as cofactor.

The protein resides in the cytoplasm. The catalysed reaction is tRNA(Phe) + L-phenylalanine + ATP = L-phenylalanyl-tRNA(Phe) + AMP + diphosphate + H(+). This Bartonella bacilliformis (strain ATCC 35685 / KC583 / Herrer 020/F12,63) protein is Phenylalanine--tRNA ligase alpha subunit.